A 205-amino-acid chain; its full sequence is Guanylate kinase (205 aa).

The Guanylate kinase-like domain maps to 6–184 (GLLLVVSGPS…SAKEIEGIIS (179 aa)). Residue 13–20 (GPSGAGKG) participates in ATP binding.

It belongs to the guanylate kinase family.

Its subcellular location is the cytoplasm. It carries out the reaction GMP + ATP = GDP + ADP. In terms of biological role, essential for recycling GMP and indirectly, cGMP. This chain is Guanylate kinase, found in Clostridioides difficile (strain 630) (Peptoclostridium difficile).